We begin with the raw amino-acid sequence, 308 residues long: Methionyl-tRNA formyltransferase (308 aa).

110-113 contributes to the (6S)-5,6,7,8-tetrahydrofolate binding site; sequence SLLP.

The protein belongs to the Fmt family.

It carries out the reaction L-methionyl-tRNA(fMet) + (6R)-10-formyltetrahydrofolate = N-formyl-L-methionyl-tRNA(fMet) + (6S)-5,6,7,8-tetrahydrofolate + H(+). Its function is as follows. Attaches a formyl group to the free amino group of methionyl-tRNA(fMet). The formyl group appears to play a dual role in the initiator identity of N-formylmethionyl-tRNA by promoting its recognition by IF2 and preventing the misappropriation of this tRNA by the elongation apparatus. The polypeptide is Methionyl-tRNA formyltransferase (Neisseria gonorrhoeae (strain NCCP11945)).